A 153-amino-acid chain; its full sequence is Putative WASP homolog-associated protein with actin, membranes and microtubules-like protein 1 (153 aa).

A coiled-coil region spans residues 113–151 (AIQFYEIQLELYEVKFEILKNKEILLTTQLDSLERLIKD).

The protein is Putative WASP homolog-associated protein with actin, membranes and microtubules-like protein 1 (WHAMMP3) of Homo sapiens (Human).